Consider the following 84-residue polypeptide: Gomesin (84 aa).

The N-terminal stretch at 1–23 (MNRTRLFACLLLAVLILVHESNA) is a signal peptide. At Gln-24 the chain carries Pyrrolidone carboxylic acid. 2 disulfide bridges follow: Cys-25–Cys-38 and Cys-29–Cys-34. Position 41 is an arginine amide (Arg-41). The propeptide occupies 42–84 (GKRSLDETNVGTSDVEKRAFDDSNVPSLVEERELEDEGSFIFD).

In hemocytes only, but not in all hemocytes observed.

The protein resides in the secreted. Functionally, active against several Gram-positive bacteria such as Bacillus spp, Staphylococcus spp and E.faecalis, several Gram-negative bacteria such as E.coli, K.pneumoniae, P.aeruginosa and Salmonella spp, filamentous fungi such as N.crassa, T.viridae and yeasts such as C.albicans. It is active against the parasite L.amazonensis as well. It shows hemolytic activity. This chain is Gomesin, found in Acanthoscurria gomesiana (Tarantula spider).